The sequence spans 44 residues: 2S seed storage albumin protein (44 aa).

2 disulfide bridges follow: C7-C42 and C19-C31.

Belongs to the 2S seed storage albumins family. As to quaternary structure, the mature protein consists of a small and a large chain linked by 2 disulfide bonds.

This is a 2S seed storage protein. Has antifungal activity. Inhibits spore germination in H.sativum (IC(50)=62.5 ug/ml) and P.betae (IC(50)=62.5 ug/ml). Inhibits growth of H.sativum, V.albo-atrum and P.infestans. This Taraxacum officinale (Common dandelion) protein is 2S seed storage albumin protein.